Reading from the N-terminus, the 64-residue chain is OPG024 protein (64 aa).

The interval 1–64 (MSSKGGSSGG…GGVKSGTGKI (64 aa)) is disordered. Over residues 23–34 (NKGSKTYTSSGS) the composition is skewed to low complexity. Residues 49 to 64 (VNGGVNGGVKSGTGKI) are compositionally biased toward gly residues.

The protein belongs to the orthopoxvirus OPG024 family.

The protein is OPG024 protein (OPG023) of Cynomys gunnisoni (Gunnison's prairie dog).